Reading from the N-terminus, the 496-residue chain is Maturase K (496 aa).

The protein belongs to the intron maturase 2 family. MatK subfamily.

The protein resides in the plastid. The protein localises to the chloroplast. In terms of biological role, usually encoded in the trnK tRNA gene intron. Probably assists in splicing its own and other chloroplast group II introns. The polypeptide is Maturase K (Paeonia cambessedesii (Majorcan peony)).